Consider the following 291-residue polypeptide: NAD kinase (291 aa).

Aspartate 72 (proton acceptor) is an active-site residue. NAD(+) is bound by residues 72 to 73 (DG), 146 to 147 (ND), arginine 157, arginine 174, aspartate 176, 187 to 192 (TAYSLS), and glutamine 247.

Belongs to the NAD kinase family. A divalent metal cation is required as a cofactor.

The protein resides in the cytoplasm. It catalyses the reaction NAD(+) + ATP = ADP + NADP(+) + H(+). In terms of biological role, involved in the regulation of the intracellular balance of NAD and NADP, and is a key enzyme in the biosynthesis of NADP. Catalyzes specifically the phosphorylation on 2'-hydroxyl of the adenosine moiety of NAD to yield NADP. The chain is NAD kinase from Hydrogenovibrio crunogenus (strain DSM 25203 / XCL-2) (Thiomicrospira crunogena).